A 603-amino-acid chain; its full sequence is MVLRLSKLFLRTLREDPADAEVASHRLLVRAGYIRRAAPGIYTWLPLGLSVLRKVEKVIREEMAAIGAQEVHFPALLPKEPYEATNRWTEYGEGIFRLKDRKGGDYLLAPTHEEMFTLLVKDLYSSYKDLPLSIYQIQNKYRDEARPRAGLLRGREFIMKDSYSFDVDDAGLDASYNAHRAAYLKIFERLGLEVIPVAATAGAMGGSRSEEFLHPTEIGEDTFVRSAGGYAANVEAVTTVVPAEIDFSNAPAAEIRDTPNTPTIDTLVDAANQLVPRDENDGGAWTAADTLKNVVLAVTLPTGERQIVVIGVPGDRGVDLKRVEANIGAYLPVAGEITVEAAGEEDLARNPLIVRGYLGPGMSLGTPLLGLEGAAKLLYLVDPRVVKGTAWVTGANMAGKHVFGLVAGRDFGWDGVIECTEVRAGDEAPDGSGPLETARGIEMGHIFQLGRKYAEALELKVLDQNGKQVVVTMGSYGVGVTRAVAALAESNHDAKGLVWPRAVAPADVHVVAVGRGEEIFAAAEQLSLELEAAGLEVIYDDRPKVSPGVKFGDAELIGVPTILAVGRGLVDGVVEIKDRRSGEAENVAVEKAVDYVVNAVRSK.

It belongs to the class-II aminoacyl-tRNA synthetase family. ProS type 1 subfamily. Homodimer.

It is found in the cytoplasm. It carries out the reaction tRNA(Pro) + L-proline + ATP = L-prolyl-tRNA(Pro) + AMP + diphosphate. Functionally, catalyzes the attachment of proline to tRNA(Pro) in a two-step reaction: proline is first activated by ATP to form Pro-AMP and then transferred to the acceptor end of tRNA(Pro). As ProRS can inadvertently accommodate and process non-cognate amino acids such as alanine and cysteine, to avoid such errors it has two additional distinct editing activities against alanine. One activity is designated as 'pretransfer' editing and involves the tRNA(Pro)-independent hydrolysis of activated Ala-AMP. The other activity is designated 'posttransfer' editing and involves deacylation of mischarged Ala-tRNA(Pro). The misacylated Cys-tRNA(Pro) is not edited by ProRS. The sequence is that of Proline--tRNA ligase from Arthrobacter sp. (strain FB24).